The chain runs to 853 residues: DNA mismatch repair protein MutS (853 aa).

ATP is bound at residue Gly-614–Ser-621.

The protein belongs to the DNA mismatch repair MutS family.

In terms of biological role, this protein is involved in the repair of mismatches in DNA. It is possible that it carries out the mismatch recognition step. This protein has a weak ATPase activity. This Escherichia coli O81 (strain ED1a) protein is DNA mismatch repair protein MutS.